Reading from the N-terminus, the 446-residue chain is D-inositol 3-phosphate glycosyltransferase (446 aa).

The disordered stretch occupies residues 1–21 (MSHYVGRLGRRSPAGSGRLRL). His-34 is a 1D-myo-inositol 3-phosphate binding site. UDP-N-acetyl-alpha-D-glucosamine contacts are provided by residues 40 to 41 (QP) and Gly-48. Residues 45–50 (DAGGMN), Lys-103, Tyr-136, Thr-160, and Arg-180 each bind 1D-myo-inositol 3-phosphate. Positions 255, 260, and 321 each coordinate UDP-N-acetyl-alpha-D-glucosamine. Residues Phe-330, Arg-331, and Ala-333 each coordinate Mg(2+). Positions 343 and 351 each coordinate UDP-N-acetyl-alpha-D-glucosamine. A Mg(2+)-binding site is contributed by Thr-357.

The protein belongs to the glycosyltransferase group 1 family. MshA subfamily. Homodimer.

The catalysed reaction is 1D-myo-inositol 3-phosphate + UDP-N-acetyl-alpha-D-glucosamine = 1D-myo-inositol 2-acetamido-2-deoxy-alpha-D-glucopyranoside 3-phosphate + UDP + H(+). Catalyzes the transfer of a N-acetyl-glucosamine moiety to 1D-myo-inositol 3-phosphate to produce 1D-myo-inositol 2-acetamido-2-deoxy-glucopyranoside 3-phosphate in the mycothiol biosynthesis pathway. The protein is D-inositol 3-phosphate glycosyltransferase of Streptomyces scabiei (strain 87.22).